Consider the following 452-residue polypeptide: Bis(5'-adenosyl)-triphosphatase ENPP4 (452 aa).

An N-terminal signal peptide occupies residues 1–15 (MKLLVILLFSGLITG). Over 16–406 (FRSDSSSSLP…DQWCINLPEA (391 aa)) the chain is Extracellular. 2 residues coordinate Zn(2+): aspartate 34 and threonine 70. The active-site AMP-threonine intermediate is the threonine 70. Substrate is bound by residues asparagine 91 and tyrosine 154. 2 N-linked (GlcNAc...) asparagine glycosylation sites follow: asparagine 155 and asparagine 166. Aspartate 189, histidine 193, aspartate 237, and histidine 238 together coordinate Zn(2+). Aspartate 189 is a substrate binding site. The cysteines at positions 254 and 287 are disulfide-linked. Residue asparagine 276 is glycosylated (N-linked (GlcNAc...) asparagine). Histidine 335 serves as a coordination point for Zn(2+). Cysteine 393 and cysteine 400 are joined by a disulfide. A helical transmembrane segment spans residues 407–427 (IAIVIGSLLVLTMLTCLIIIM). Residues 428–452 (QNRLSVPRPFSRLQLQEDDDDPLIG) are Cytoplasmic-facing.

The protein belongs to the nucleotide pyrophosphatase/phosphodiesterase family. The cofactor is Zn(2+).

It localises to the cell membrane. The enzyme catalyses P(1),P(3)-bis(5'-adenosyl) triphosphate + H2O = AMP + ADP + 2 H(+). Hydrolyzes extracellular Ap3A into AMP and ADP, and Ap4A into AMP and ATP. Ap3A and Ap4A are diadenosine polyphosphates thought to induce proliferation of vascular smooth muscle cells. Acts as a procoagulant, mediating platelet aggregation at the site of nascent thrombus via release of ADP from Ap3A and activation of ADP receptors. This Pongo abelii (Sumatran orangutan) protein is Bis(5'-adenosyl)-triphosphatase ENPP4 (ENPP4).